The primary structure comprises 475 residues: Sulfate adenylyltransferase subunit 1 (475 aa).

Positions 25–239 (KSLLRFLTCG…EVLETVEIQR (215 aa)) constitute a tr-type G domain. Positions 34 to 41 (GSVDDGKS) are G1. 34–41 (GSVDDGKS) provides a ligand contact to GTP. The interval 92-96 (GITID) is G2. A G3 region spans residues 113–116 (DTPG). GTP is bound by residues 113–117 (DTPGH) and 168–171 (NKMD). The tract at residues 168-171 (NKMD) is G4. Residues 206–208 (SAL) are G5.

Belongs to the TRAFAC class translation factor GTPase superfamily. Classic translation factor GTPase family. CysN/NodQ subfamily. Heterodimer composed of CysD, the smaller subunit, and CysN.

It carries out the reaction sulfate + ATP + H(+) = adenosine 5'-phosphosulfate + diphosphate. It functions in the pathway sulfur metabolism; hydrogen sulfide biosynthesis; sulfite from sulfate: step 1/3. Functionally, with CysD forms the ATP sulfurylase (ATPS) that catalyzes the adenylation of sulfate producing adenosine 5'-phosphosulfate (APS) and diphosphate, the first enzymatic step in sulfur assimilation pathway. APS synthesis involves the formation of a high-energy phosphoric-sulfuric acid anhydride bond driven by GTP hydrolysis by CysN coupled to ATP hydrolysis by CysD. The polypeptide is Sulfate adenylyltransferase subunit 1 (Citrobacter koseri (strain ATCC BAA-895 / CDC 4225-83 / SGSC4696)).